Consider the following 356-residue polypeptide: Trans-enoyl reductase pgmF (356 aa).

NADP(+) contacts are provided by residues 57–60, 175–178, 198–201, tyrosine 216, 261–262, and 342–343; these read VDFK, SGGC, STPN, VG, and AK.

It belongs to the zinc-containing alcohol dehydrogenase family.

FAD-linked oxidoreductase; part of the gene cluster that mediates the biosynthesis of pleosporalin A, ascomycone A, as well as a third cryptic naphthoquinone derived pigment, all responsible for the coloration of conidia. The pathway begins with the biosynthesis of the cyclized heptaketide 3-acetonyl-1,6,8-trihydroxy-2-naphthaldehyde by the NR-PKS pgmA. The C-6 hydroxyl group is further methylated by the O-methyltransferase pgmB to yield fusarubinaldehyde which is in turn oxidized by the cytochrome P450 monooxygenase pgmC at C-9. The C-1 hydroxyl group is then methylated spontaneously. Although pgmE, pgmD and pgmH are essential for the production of pleosporalin A, it is not the case for the 2 other final products and it remains difficult to assign a specific function to each enzyme. PgmF and pgmG seem not to be involved in pigment biosynthesis although they were regulated by the cluster-specific transcription factor pgmR. The chain is Trans-enoyl reductase pgmF from Aspergillus terreus.